A 306-amino-acid chain; its full sequence is N-acetylmuramic acid 6-phosphate etherase (306 aa).

The 164-residue stretch at 60 to 223 (TAAALRGGGR…STGAMVRLGK (164 aa)) folds into the SIS domain. E88 acts as the Proton donor in catalysis. E119 is a catalytic residue.

The protein belongs to the GCKR-like family. MurNAc-6-P etherase subfamily. Homodimer.

The enzyme catalyses N-acetyl-D-muramate 6-phosphate + H2O = N-acetyl-D-glucosamine 6-phosphate + (R)-lactate. The protein operates within amino-sugar metabolism; N-acetylmuramate degradation. Functionally, specifically catalyzes the cleavage of the D-lactyl ether substituent of MurNAc 6-phosphate, producing GlcNAc 6-phosphate and D-lactate. In Gloeobacter violaceus (strain ATCC 29082 / PCC 7421), this protein is N-acetylmuramic acid 6-phosphate etherase.